A 201-amino-acid polypeptide reads, in one-letter code: Small ribosomal subunit protein uS4c (201 aa).

Positions 17–44 (ALPGLTNKKPRTGSDLRNQSRSGKKSQY) are disordered. Residues 89 to 149 (MRLDNILFRL…DEQKSRALIQ (61 aa)) form the S4 RNA-binding domain.

The protein belongs to the universal ribosomal protein uS4 family. In terms of assembly, part of the 30S ribosomal subunit. Contacts protein S5. The interaction surface between S4 and S5 is involved in control of translational fidelity.

Its subcellular location is the plastid. The protein localises to the chloroplast. Functionally, one of the primary rRNA binding proteins, it binds directly to 16S rRNA where it nucleates assembly of the body of the 30S subunit. In terms of biological role, with S5 and S12 plays an important role in translational accuracy. This chain is Small ribosomal subunit protein uS4c (rps4), found in Solanum bulbocastanum (Wild potato).